The chain runs to 136 residues: Large ribosomal subunit protein uL16c (136 aa).

Positions 1–20 are disordered; sequence MLSPKRTRFRKQHRGRMKGK.

Belongs to the universal ribosomal protein uL16 family. In terms of assembly, part of the 50S ribosomal subunit.

It is found in the plastid. Its subcellular location is the chloroplast. This is Large ribosomal subunit protein uL16c from Triticum aestivum (Wheat).